The primary structure comprises 86 residues: Large ribosomal subunit protein bL27 (86 aa).

The interval 1–26 (MATKKAGGSSRNGRDSAGRRLGVKQS) is disordered.

The protein belongs to the bacterial ribosomal protein bL27 family.

The protein is Large ribosomal subunit protein bL27 of Rickettsia canadensis (strain McKiel).